We begin with the raw amino-acid sequence, 443 residues long: Methylenetetrahydrofolate--tRNA-(uracil-5-)-methyltransferase TrmFO (443 aa).

8-13 contributes to the FAD binding site; the sequence is GAGLAG.

The protein belongs to the MnmG family. TrmFO subfamily. Requires FAD as cofactor.

The protein localises to the cytoplasm. The catalysed reaction is uridine(54) in tRNA + (6R)-5,10-methylene-5,6,7,8-tetrahydrofolate + NADH + H(+) = 5-methyluridine(54) in tRNA + (6S)-5,6,7,8-tetrahydrofolate + NAD(+). It carries out the reaction uridine(54) in tRNA + (6R)-5,10-methylene-5,6,7,8-tetrahydrofolate + NADPH + H(+) = 5-methyluridine(54) in tRNA + (6S)-5,6,7,8-tetrahydrofolate + NADP(+). Catalyzes the folate-dependent formation of 5-methyl-uridine at position 54 (M-5-U54) in all tRNAs. The chain is Methylenetetrahydrofolate--tRNA-(uracil-5-)-methyltransferase TrmFO from Thermus thermophilus (strain ATCC 27634 / DSM 579 / HB8).